A 91-amino-acid polypeptide reads, in one-letter code: UPF0147 protein APE_2336a (91 aa).

The protein belongs to the UPF0147 family.

The polypeptide is UPF0147 protein APE_2336a (Aeropyrum pernix (strain ATCC 700893 / DSM 11879 / JCM 9820 / NBRC 100138 / K1)).